A 54-amino-acid chain; its full sequence is Preprotein translocase subunit SecG (54 aa).

Residues 1–30 (MSKNKQDAGLSTSAGLVRYMDEDASKIKIA) are Cytoplasmic-facing. Residues 31-52 (PEKVLGITISIMVLLFILNYGL) traverse the membrane as a helical segment. Residues 53 to 54 (LA) lie on the Extracellular side of the membrane.

This sequence belongs to the SEC61-beta family. As to quaternary structure, component of the protein translocase complex. Heterotrimer consisting of alpha (SecY), beta (SecG) and gamma (SecE) subunits. Can form oligomers of the heterotrimer.

It localises to the cell membrane. Involved in protein export. The function of the beta subunit is unknown, but it may be involved in stabilization of the trimeric complex. In Methanococcus aeolicus (strain ATCC BAA-1280 / DSM 17508 / OCM 812 / Nankai-3), this protein is Preprotein translocase subunit SecG.